The following is a 390-amino-acid chain: GTPase Obg (390 aa).

In terms of domain architecture, Obg spans 1–159 (MKFVDEAVIR…RHLRLELLLL (159 aa)). Residues 22-42 (SFRTEKYVPRGGPDGGDGGDG) form a disordered region. A compositionally biased stretch (gly residues) spans 33–42 (GPDGGDGGDG). Positions 160-333 (ADVGMLGLPN…LTYNLMTTIE (174 aa)) constitute an OBG-type G domain. Residues 166-173 (GLPNAGKS), 191-195 (FTTLI), 213-216 (DIPG), 283-286 (NKVD), and 314-316 (SAL) each bind GTP. Mg(2+) is bound by residues Ser-173 and Thr-193.

Belongs to the TRAFAC class OBG-HflX-like GTPase superfamily. OBG GTPase family. As to quaternary structure, monomer. Requires Mg(2+) as cofactor.

Its subcellular location is the cytoplasm. Its function is as follows. An essential GTPase which binds GTP, GDP and possibly (p)ppGpp with moderate affinity, with high nucleotide exchange rates and a fairly low GTP hydrolysis rate. Plays a role in control of the cell cycle, stress response, ribosome biogenesis and in those bacteria that undergo differentiation, in morphogenesis control. In Photobacterium profundum (strain SS9), this protein is GTPase Obg.